Consider the following 523-residue polypeptide: uncharacterized protein (523 aa).

This is an uncharacterized protein from Saccharomyces cerevisiae (strain ATCC 204508 / S288c) (Baker's yeast).